Consider the following 334-residue polypeptide: Ventral anterior homeobox 1 (334 aa).

Positions 1–34 (MFGKPDKMDVRCHSDAEAARVSKNAHKESRESKG) are enriched in basic and acidic residues. The interval 1-41 (MFGKPDKMDVRCHSDAEAARVSKNAHKESRESKGAEGNLPA) is disordered. The segment at residues 100–159 (PKRTRTSFTAEQLYRLEMEFQRCQYVVGRERTELARQLNLSETQVKVWFQNRRTKQKKDQ) is a DNA-binding region (homeobox). Disordered regions lie at residues 234–263 (PGPA…GLHA) and 314–334 (SAFE…KALD). The segment covering 323-334 (NNKEGAEKKALD) has biased composition (basic and acidic residues).

It belongs to the EMX homeobox family.

The protein localises to the nucleus. Functionally, transcription factor that may function in dorsoventral specification of the forebrain. Required for axon guidance and major tract formation in the developing forebrain. May contribute to the differentiation of the neuroretina, pigmented epithelium and optic stalk. The chain is Ventral anterior homeobox 1 (VAX1) from Homo sapiens (Human).